Here is a 245-residue protein sequence, read N- to C-terminus: Putative insertion sequence ATP-binding protein y4pL (245 aa).

106-113 (GPSGVGKS) lines the ATP pocket.

It belongs to the IS21/IS1162 putative ATP-binding protein family.

In Sinorhizobium fredii (strain NBRC 101917 / NGR234), this protein is Putative insertion sequence ATP-binding protein y4pL.